The primary structure comprises 449 residues: Putative tartrate transporter (449 aa).

The next 11 membrane-spanning stretches (helical) occupy residues 34–54 (IVPF…NIGF), 64–84 (GFSS…YFLF), 99–119 (IWIA…AFVQ), 130–150 (LLGV…SFWF), 156–176 (AAVT…GSPI), 194–214 (WMFL…LFFL), 259–279 (VIAL…LGIW), 292–312 (IEVG…MVLW), 336–356 (GLAF…LTIV), 367–387 (LWSM…IATI), and 414–434 (GGLY…LILA).

Belongs to the major facilitator superfamily. Phthalate permease family.

The protein localises to the cell membrane. Its function is as follows. Component of the tartrate utilization system and may allow entry of tartrate and tartrate dehydrogenase. The sequence is that of Putative tartrate transporter (ttuB) from Agrobacterium vitis (Rhizobium vitis).